The sequence spans 112 residues: uncharacterized protein (112 aa).

This sequence to M.jannaschii MJ1244 and M.thermoautotrophicum MTH1110.

This is an uncharacterized protein from Methanocaldococcus jannaschii (strain ATCC 43067 / DSM 2661 / JAL-1 / JCM 10045 / NBRC 100440) (Methanococcus jannaschii).